Here is a 229-residue protein sequence, read N- to C-terminus: Adapter protein MecA (229 aa).

This sequence belongs to the MecA family. In terms of assembly, homodimer.

In terms of biological role, enables the recognition and targeting of unfolded and aggregated proteins to the ClpC protease or to other proteins involved in proteolysis. This is Adapter protein MecA from Latilactobacillus sakei subsp. sakei (strain 23K) (Lactobacillus sakei subsp. sakei).